Consider the following 438-residue polypeptide: Thymidine phosphorylase (438 aa).

It belongs to the thymidine/pyrimidine-nucleoside phosphorylase family. In terms of assembly, homodimer.

It catalyses the reaction thymidine + phosphate = 2-deoxy-alpha-D-ribose 1-phosphate + thymine. The protein operates within pyrimidine metabolism; dTMP biosynthesis via salvage pathway; dTMP from thymine: step 1/2. The enzymes which catalyze the reversible phosphorolysis of pyrimidine nucleosides are involved in the degradation of these compounds and in their utilization as carbon and energy sources, or in the rescue of pyrimidine bases for nucleotide synthesis. The sequence is that of Thymidine phosphorylase from Sinorhizobium fredii (strain NBRC 101917 / NGR234).